Here is a 210-residue protein sequence, read N- to C-terminus: Quaternary-amine-specific corrinoid protein (210 aa).

In terms of domain architecture, B12-binding N-terminal spans 1-90 (MADWKNLTQA…VLGSGDTAVA (90 aa)). One can recognise a B12-binding domain in the interval 90–210 (AGTILIGTAH…GVKICQAWVG (121 aa)). H103 contacts methylcob(III)alamin.

This sequence belongs to the methylamine corrinoid protein family. As to quaternary structure, the proline betaine:THF methyl transfer system is composed of two methyltransferases, MtpB and MtqA, and the corrinoid protein MtqC. The L-carnitine:THF methyl transfer system is composed of two methyltransferases, MtcB and MtqA, and the corrinoid protein MtqC.

In terms of biological role, involved in the degradation of the quaternary amines L-proline betaine and L-carnitine. Component of a corrinoid-dependent methyltransferase system that transfers a methyl group from L-proline betaine or L-carnitine to tetrahydrofolate (THF), forming methyl-THF, a key intermediate in the Wood-Ljungdahl acetogenesis pathway. Acts as a methyl group carrier between MtpB or MtcB, and MtqA. A methyl group from L-proline betaine or L-carnitine is first transferred to the corrinoid prosthetic group of MtqC by MtpB or MtcB, respectively, and then transferred from MtqC to THF by MtqA. The protein is Quaternary-amine-specific corrinoid protein of Eubacterium limosum.